A 485-amino-acid polypeptide reads, in one-letter code: Glycogen synthase (485 aa).

ADP-alpha-D-glucose is bound at residue Lys-17.

Belongs to the glycosyltransferase 1 family. Bacterial/plant glycogen synthase subfamily.

The catalysed reaction is [(1-&gt;4)-alpha-D-glucosyl](n) + ADP-alpha-D-glucose = [(1-&gt;4)-alpha-D-glucosyl](n+1) + ADP + H(+). The protein operates within glycan biosynthesis; glycogen biosynthesis. Its function is as follows. Synthesizes alpha-1,4-glucan chains using ADP-glucose. This chain is Glycogen synthase, found in Novosphingobium aromaticivorans (strain ATCC 700278 / DSM 12444 / CCUG 56034 / CIP 105152 / NBRC 16084 / F199).